Here is a 366-residue protein sequence, read N- to C-terminus: Palmitoyltransferase ZDHHC2 (366 aa).

Residues 1-15 lie on the Cytoplasmic side of the membrane; that stretch reads MAPSGPGGVRRRCRR. The chain crosses the membrane as a helical span at residues 16–36; that stretch reads VLYWIPVVFISLLLGWSYYAY. Topologically, residues 37–47 are lumenal; it reads AIQLCIVSMEN. A helical transmembrane segment spans residues 48–68; it reads IGEQVVCLMAYHLLFAMFVWS. The Cytoplasmic segment spans residues 69 to 169; the sequence is YWKTIFTLPM…NNCVGFSNYK (101 aa). The region spanning 126–176 is the DHHC domain; it reads RYCDRCRLIKPDRCHHCSVCDKCILKMDHHCPWVNNCVGFSNYKFFLLFLA. Cys-156 functions as the S-palmitoyl cysteine intermediate in the catalytic mechanism. The chain crosses the membrane as a helical span at residues 170 to 190; it reads FFLLFLAYSLLYCLFIAATDL. At 191–207 the chain is on the lumenal side; it reads QYFIRFWTNGLPDTQAK. A helical membrane pass occupies residues 208-228; sequence FHIMFLFFAAAMFSVSLSSLF. At 229–366 the chain is on the cytoplasmic side; it reads GYHCWLVSKN…NPALTMENET (138 aa). 2 stretches are compositionally biased toward polar residues: residues 297 to 316 and 332 to 349; these read VNQDPEQPSTPAGLNSTAKN and SHLLTDSQTWTENSSNSG. A disordered region spans residues 297–366; that stretch reads VNQDPEQPST…NPALTMENET (70 aa). Positions 298–366 are mediates localization to plasma membrane and recycling endosomes; the sequence is NQDPEQPSTP…NPALTMENET (69 aa). Positions 334–335 match the Non-canonical dileucine endocytic signal motif; the sequence is LL. Residues 357 to 360 carry the NPxY-like endocytic signal motif; the sequence is NPAL.

This sequence belongs to the DHHC palmitoyltransferase family. As to quaternary structure, monomer. Homodimer. The monomeric form has a higher catalytic activity. In terms of processing, autopalmitoylated.

Its subcellular location is the postsynaptic density. It is found in the postsynaptic recycling endosome membrane. The protein resides in the cell membrane. The protein localises to the endoplasmic reticulum membrane. It localises to the golgi apparatus membrane. The catalysed reaction is L-cysteinyl-[protein] + hexadecanoyl-CoA = S-hexadecanoyl-L-cysteinyl-[protein] + CoA. It carries out the reaction L-cysteinyl-[protein] + tetradecanoyl-CoA = S-tetradecanoyl-L-cysteinyl-[protein] + CoA. It catalyses the reaction L-cysteinyl-[protein] + octadecanoyl-CoA = S-octadecanoyl-L-cysteinyl-[protein] + CoA. Its function is as follows. Palmitoyltransferase that catalyzes the addition of palmitate onto various protein substrates and is involved in a variety of cellular processes. Has no stringent fatty acid selectivity and in addition to palmitate can also transfer onto target proteins myristate from tetradecanoyl-CoA and stearate from octadecanoyl-CoA. In the nervous system, plays a role in long term synaptic potentiation by palmitoylating AKAP5 through which it regulates protein trafficking from the dendritic recycling endosomes to the plasma membrane and controls both structural and functional plasticity at excitatory synapses. In dendrites, mediates the palmitoylation of DLG4 when synaptic activity decreases and induces synaptic clustering of DLG4 and associated AMPA-type glutamate receptors. Also mediates the de novo and turnover palmitoylation of RGS7BP, a shuttle for Gi/o-specific GTPase-activating proteins/GAPs, promoting its localization to the plasma membrane in response to the activation of G protein-coupled receptors. Through the localization of these GTPase-activating proteins/GAPs, it also probably plays a role in G protein-coupled receptors signaling in neurons. Also probably plays a role in cell adhesion by palmitoylating CD9 and CD151 to regulate their expression and function. Palmitoylates the endoplasmic reticulum protein CKAP4 and regulates its localization to the plasma membrane. Could also palmitoylate LCK and regulate its localization to the plasma membrane. This Rattus norvegicus (Rat) protein is Palmitoyltransferase ZDHHC2.